The chain runs to 129 residues: L-ectoine synthase (129 aa).

Belongs to the ectoine synthase family.

It catalyses the reaction (2S)-4-acetamido-2-aminobutanoate = L-ectoine + H2O. The protein operates within amine and polyamine biosynthesis; ectoine biosynthesis; L-ectoine from L-aspartate 4-semialdehyde: step 3/3. Catalyzes the circularization of gamma-N-acetyl-alpha,gamma-diaminobutyric acid (ADABA) to ectoine (1,4,5,6-tetrahydro-2-methyl-4-pyrimidine carboxylic acid), which is an excellent osmoprotectant. This chain is L-ectoine synthase, found in Halalkalibacterium halodurans (strain ATCC BAA-125 / DSM 18197 / FERM 7344 / JCM 9153 / C-125) (Bacillus halodurans).